We begin with the raw amino-acid sequence, 393 residues long: Envelope glycoprotein M (393 aa).

Over 1 to 14 the chain is Intravirion; the sequence is MCGPRNAEAVSWRS. A helical membrane pass occupies residues 15–35; it reads WLIEVCGFALAALTLVLTLIF. Over 36–83 the chain is Virion surface; the sequence is ASLPEMGFPCFYATVADYDTLNDTSGGVWTRQPLVAPALFLETPTVTS. Residues 84 to 104 form a helical membrane-spanning segment; that stretch reads FFGFTATVLLAHALYAVAGAV. Over 105–130 the chain is Intravirion; it reads VLRREAGRLAFQPSVVLYAASTVAAP. The helical transmembrane segment at 131-151 threads the bilayer; that stretch reads GTLMLGALCAWTLQAVVLLMA. Residues 152-154 lie on the Virion surface side of the membrane; sequence HKQ. Residues 155-175 traverse the membrane as a helical segment; that stretch reads AGLAAAAYITHFVFLALFGAC. The Intravirion portion of the chain corresponds to 176-207; sequence HACKGTGDVRAALAASPPLRRVAVHARAVVTN. Residues 208 to 228 traverse the membrane as a helical segment; the sequence is VVLGAVGLGAAVVGLMLGVLL. The Virion surface portion of the chain corresponds to 229–241; the sequence is ANSFHISLWKTAE. Residues 242 to 262 traverse the membrane as a helical segment; sequence AALAVFTLLALALMVFVEVVV. The Intravirion portion of the chain corresponds to 263–264; the sequence is SG. The chain crosses the membrane as a helical span at residues 265–285; the sequence is YVQVLPTPAFCVLVASAAFGV. At 286 to 303 the chain is on the virion surface side; it reads SAHRYFAKFSEALGETHG. Residues 304-324 form a helical membrane-spanning segment; it reads VVIGTRAVLAVLSLIALAMIV. The Intravirion segment spans residues 325–393; that stretch reads VRLVRACIAH…EVVYENLGFE (69 aa).

Belongs to the herpesviridae glycoprotein M family. In terms of assembly, interacts (via N-terminus) with gN (via N-terminus). The gM-gN heterodimer forms the gCII complex.

The protein resides in the virion membrane. The protein localises to the host Golgi apparatus. Its subcellular location is the host trans-Golgi network. It is found in the host endosome membrane. It localises to the host nucleus inner membrane. Its function is as follows. Envelope glycoprotein important for virion assembly and egress. Plays a role in the correct incorporation of gH-gL into virion membrane. Directs the glycoprotein N (gN) to the host trans-Golgi network. This is Envelope glycoprotein M from Suid herpesvirus 1 (SuHV-1).